The sequence spans 380 residues: Glutamate 5-kinase (380 aa).

Lys-15 is an ATP binding site. Positions 59, 146, and 158 each coordinate substrate. 178–179 (TD) serves as a coordination point for ATP. The region spanning 285–363 (RGSVTVDAGA…AEFERLLGYA (79 aa)) is the PUA domain.

Belongs to the glutamate 5-kinase family.

The protein localises to the cytoplasm. The catalysed reaction is L-glutamate + ATP = L-glutamyl 5-phosphate + ADP. Its pathway is amino-acid biosynthesis; L-proline biosynthesis; L-glutamate 5-semialdehyde from L-glutamate: step 1/2. In terms of biological role, catalyzes the transfer of a phosphate group to glutamate to form L-glutamate 5-phosphate. This chain is Glutamate 5-kinase, found in Acidovorax ebreus (strain TPSY) (Diaphorobacter sp. (strain TPSY)).